A 653-amino-acid chain; its full sequence is Protease 1 (653 aa).

Positions 1 to 20 (MKRICGSLLLLGLSISAALA) form a signal peptide, or 27. Positions 21–205 (APASRPAAFD…RRLAAASGEK (185 aa)) are excised as a propeptide. Intrachain disulfides connect cysteine 211–cysteine 421, cysteine 217–cysteine 285, and cysteine 241–cysteine 263. Residues histidine 262, aspartate 318, and serine 399 each act as charge relay system in the active site. The 80-residue stretch at 474–553 (NTPPVANFTS…TNTKTGSVTV (80 aa)) folds into the PKD domain. Positions 474-653 (NTPPVANFTS…AAQRAPGSCG (180 aa)) are cleaved as a propeptide — thr/Ser-rich. A P/Homo B domain is found at 555–653 (GGPGAQTYTN…AAQRAPGSCG (99 aa)).

It belongs to the peptidase S1 family. Three disulfide bonds are present.

It is found in the secreted. The enzyme catalyses Preferential cleavage: Lys-|-Xaa, including Lys-|-Pro.. This is Protease 1 from Achromobacter lyticus.